Reading from the N-terminus, the 206-residue chain is Enterobactin synthase component D (206 aa).

Mg(2+) is bound by residues Asp-107, Glu-109, and Glu-152.

This sequence belongs to the P-Pant transferase superfamily. EntD family. As to quaternary structure, entB, EntD, EntE, and EntF form a multienzyme complex called enterobactin synthase. The cofactor is Mg(2+).

Its subcellular location is the membrane. It catalyses the reaction apo-[aryl-carrier protein] + CoA = holo-[aryl-carrier protein] + adenosine 3',5'-bisphosphate + H(+). It carries out the reaction apo-[peptidyl-carrier protein] + CoA = holo-[peptidyl-carrier protein] + adenosine 3',5'-bisphosphate + H(+). It participates in siderophore biosynthesis; enterobactin biosynthesis. Functionally, involved in the biosynthesis of the siderophore enterobactin (enterochelin), which is a macrocyclic trimeric lactone of N-(2,3-dihydroxybenzoyl)-serine. The serine trilactone serves as a scaffolding for the three catechol functionalities that provide hexadentate coordination for the tightly ligated iron(2+) atoms. Plays an essential role in the assembly of the enterobactin by catalyzing the transfer of the 4'-phosphopantetheine (Ppant) moiety from coenzyme A to the apo-domains of both EntB (ArCP domain) and EntF (PCP domain) to yield their holo-forms which make them competent for the activation of 2,3-dihydroxybenzoate (DHB) and L-serine, respectively. This is Enterobactin synthase component D from Escherichia coli (strain K12).